A 590-amino-acid polypeptide reads, in one-letter code: Leukocyte immunoglobulin-like receptor subfamily B member 5 (590 aa).

The signal sequence occupies residues 1-23 (MTLTLSVLICLGLSVGPRTCVQA). Residues 24 to 458 (GTLPKPTLWA…PQSGLGRHLG (435 aa)) are Extracellular-facing. 4 Ig-like C2-type domains span residues 27 to 116 (PKPT…LELV), 111 to 228 (DPLE…SLLI), 224 to 313 (PSLL…DPLD), and 337 to 418 (GENV…LVVS). An intrachain disulfide couples Cys-49 to Cys-98. N-linked (GlcNAc...) asparagine glycosylation occurs at Asn-139. Cystine bridges form between Cys-144/Cys-195 and Cys-244/Cys-295. Residues Asn-279 and Asn-339 are each glycosylated (N-linked (GlcNAc...) asparagine). A disulfide bridge links Cys-344 with Cys-395. Positions 416–433 (VVSGPSGDPSLSPTGSTP) are enriched in low complexity. The disordered stretch occupies residues 416 to 449 (VVSGPSGDPSLSPTGSTPTPGPEDQPLTPTGLDP). The chain crosses the membrane as a helical span at residues 459-479 (VVTGVSVAFVLLLFLLLFLLL). Topologically, residues 480–590 (RHRHQSKHRT…PSIYAPLAIH (111 aa)) are cytoplasmic. 2 disordered regions span residues 488–514 (RTSA…KRAS) and 529–550 (KDTQ…EAPQ). Ser-514 is modified (phosphoserine). Residues 552 to 557 (VTYAQL) carry the ITIM motif 1 motif. Over residues 562-578 (LRREATEPPPSQEREPP) the composition is skewed to basic and acidic residues. Residues 562-590 (LRREATEPPPSQEREPPAEPSIYAPLAIH) are disordered. An ITIM motif 2 motif is present at residues 582–587 (SIYAPL).

Detected in a natural killer (NK) cells.

The protein localises to the membrane. In terms of biological role, may act as receptor for class I MHC antigens. This is Leukocyte immunoglobulin-like receptor subfamily B member 5 (LILRB5) from Homo sapiens (Human).